A 299-amino-acid chain; its full sequence is MSLSVLSRKEKEKVIHRLLVQAPPGEFVNAFDDLCLLIRDEKLMHHQGECAGHQHCQKYCVPLCIDGNPVLLSHHNVMGDFRFFDYQSKLSFRFDLLQNQLRDIQSHGIIRNETEYLRSVVMCALKLYVNDHYPNGNCNVLRKTVKSKEFLIACIEDHSYDNGECWNGLWKSKWIFQVNPFLTQVTGRIFVQAHFFRCVNLHIEVSKDLKESLEVVNQAQLALSFARLVEEQENKFQAAVIEELQELSNEALRKILRRDLPVTRTLIDWQRILSDLNLVMYPKLGYVIYSRSVLCNWII.

A phosphoserine mark is found at Ser2 and Ser290.

This sequence belongs to the F-actin-capping protein alpha subunit family. Component of the F-actin capping complex, composed of a heterodimer of an alpha and a beta subunit. Component of the WASH complex, composed of F-actin-capping protein subunit alpha (CAPZA1, CAPZA2 or CAPZA3), F-actin-capping protein subunit beta (CAPZB), WASHC1, WASHC2, WASHC3, WASHC4 and WASHC5. As to expression, exclusively expressed in the testis.

It is found in the cytoplasm. The protein resides in the cytoskeleton. Functionally, F-actin-capping proteins bind in a Ca(2+)-independent manner to the fast growing ends of actin filaments (barbed end) thereby blocking the exchange of subunits at these ends. Unlike other capping proteins (such as gelsolin and severin), these proteins do not sever actin filaments. May play a role in the morphogenesis of spermatid. The sequence is that of F-actin-capping protein subunit alpha-3 (Capza3) from Mus musculus (Mouse).